The following is a 218-amino-acid chain: Small ribosomal subunit protein uS3c (218 aa).

Positions 43 to 118 (IKNYVQKNTK…KFNIAITKIA (76 aa)) constitute a KH type-2 domain.

This sequence belongs to the universal ribosomal protein uS3 family. Part of the 30S ribosomal subunit.

The protein localises to the plastid. It localises to the chloroplast. In Coffea arabica (Arabian coffee), this protein is Small ribosomal subunit protein uS3c (rps3).